The sequence spans 297 residues: Protoheme IX farnesyltransferase (297 aa).

Transmembrane regions (helical) follow at residues 26 to 46 (VTQLAVFCAVIGMFLATPGMV), 48 to 68 (YPVLFGGIVGIWLLAGAAFAV), 96 to 116 (LHIIIFSIILGSLGMIILWNF), 120 to 140 (LTMWLTLATFVGYAVIYTWLL), 147 to 167 (NIVIGGLSGAMPPALGWAAVT), 174 to 194 (AWHLVLIIFVWTPPHFWALAL), 218 to 238 (LLNIVLYTLILIAATMLPYIY), 245 to 265 (YLISAIILGLLFLAYVVALFI), and 276 to 296 (FRFSITYLSLLFAALLVDHYF).

Belongs to the UbiA prenyltransferase family. Protoheme IX farnesyltransferase subfamily.

Its subcellular location is the cell inner membrane. The enzyme catalyses heme b + (2E,6E)-farnesyl diphosphate + H2O = Fe(II)-heme o + diphosphate. Its pathway is porphyrin-containing compound metabolism; heme O biosynthesis; heme O from protoheme: step 1/1. Converts heme B (protoheme IX) to heme O by substitution of the vinyl group on carbon 2 of heme B porphyrin ring with a hydroxyethyl farnesyl side group. This Polynucleobacter necessarius subsp. necessarius (strain STIR1) protein is Protoheme IX farnesyltransferase.